Consider the following 396-residue polypeptide: Acetylornithine aminotransferase 2 (396 aa).

Pyridoxal 5'-phosphate-binding positions include 102 to 103 (GA) and Phe134. Position 137 (Arg137) interacts with N(2)-acetyl-L-ornithine. 219 to 222 (DEVQ) is a pyridoxal 5'-phosphate binding site. Lys248 bears the N6-(pyridoxal phosphate)lysine mark. Pyridoxal 5'-phosphate is bound at residue Thr276.

This sequence belongs to the class-III pyridoxal-phosphate-dependent aminotransferase family. ArgD subfamily. As to quaternary structure, homodimer. It depends on pyridoxal 5'-phosphate as a cofactor.

Its subcellular location is the cytoplasm. The enzyme catalyses N(2)-acetyl-L-ornithine + 2-oxoglutarate = N-acetyl-L-glutamate 5-semialdehyde + L-glutamate. It participates in amino-acid biosynthesis; L-arginine biosynthesis; N(2)-acetyl-L-ornithine from L-glutamate: step 4/4. The sequence is that of Acetylornithine aminotransferase 2 from Bordetella pertussis (strain Tohama I / ATCC BAA-589 / NCTC 13251).